The sequence spans 298 residues: Ketohexokinase (298 aa).

Positions 15, 41, 42, and 45 each coordinate beta-D-fructose. ATP-binding positions include arginine 108, 226–229, and 255–258; these read AEEG and GAGD. A beta-D-fructose-binding site is contributed by aspartate 258.

The protein belongs to the carbohydrate kinase PfkB family. As to quaternary structure, homodimer. As to expression, most abundant in liver, kidney, gut, spleen and pancreas. Low levels also found in adrenal, muscle, brain and eye.

It catalyses the reaction beta-D-fructose + ATP = beta-D-fructose 1-phosphate + ADP + H(+). It functions in the pathway carbohydrate metabolism; fructose metabolism. With respect to regulation, requires potassium. Inhibition by ADP. Functionally, catalyzes the phosphorylation of the ketose sugar fructose to fructose-1-phosphate. The polypeptide is Ketohexokinase (Homo sapiens (Human)).